The following is a 224-amino-acid chain: Protein-L-isoaspartate O-methyltransferase (224 aa).

Residue Ser63 is part of the active site.

It belongs to the methyltransferase superfamily. L-isoaspartyl/D-aspartyl protein methyltransferase family.

Its subcellular location is the cytoplasm. The catalysed reaction is [protein]-L-isoaspartate + S-adenosyl-L-methionine = [protein]-L-isoaspartate alpha-methyl ester + S-adenosyl-L-homocysteine. Functionally, catalyzes the methyl esterification of L-isoaspartyl residues in peptides and proteins that result from spontaneous decomposition of normal L-aspartyl and L-asparaginyl residues. It plays a role in the repair and/or degradation of damaged proteins. This chain is Protein-L-isoaspartate O-methyltransferase, found in Herpetosiphon aurantiacus (strain ATCC 23779 / DSM 785 / 114-95).